Consider the following 227-residue polypeptide: Broad specificity amino-acid racemase RacX (227 aa).

51 to 53 provides a ligand contact to substrate; sequence DRP. C82 acts as the Proton donor/acceptor in catalysis. Residues 83–85 and K161 each bind substrate; that span reads NTA. Catalysis depends on C191, which acts as the Proton donor/acceptor.

This sequence belongs to the aspartate/glutamate racemases family. Homodimer.

The enzyme catalyses an L-alpha-amino acid = a D-alpha-amino acid. The catalysed reaction is (2S,6S)-2,6-diaminopimelate = meso-2,6-diaminopimelate. It catalyses the reaction L-lysine = D-lysine. It carries out the reaction L-arginine = D-arginine. The enzyme catalyses L-ornithine = D-ornithine. The catalysed reaction is L-histidine = D-histidine. It catalyses the reaction L-alanine = D-alanine. It carries out the reaction L-tyrosine = D-tyrosine. The enzyme catalyses L-phenylalanine = D-phenylalanine. The catalysed reaction is L-serine = D-serine. It catalyses the reaction L-glutamine = D-glutamine. It carries out the reaction L-methionine = D-methionine. The enzyme catalyses L-asparagine = D-asparagine. The catalysed reaction is L-homoserine = D-homoserine. Functionally, amino-acid racemase able to utilize a broad range of substrates. Preferentially catalyzes the epimerization of LL-diaminopimelate, as well as the racemization of D-lysine, L-arginine, L-ornithine, L-lysine and D-arginine. Has lower activity against D-ornithine, L-histidine, L-alanine, L-tyrosine, L-phenylalanine, L-serine, L-glutamine, L-methionine, L-asparagine and L-homoserine. Has weak activity against L-norleucine, L-aminobutyric acid and L-norvaline. Has no activity toward nine L-amino acids (Thr, Glu, Asp, Val, Leu, Ile, Trp, Cit and Aad). D-amino acids might be used as components of peptidoglycan and/or be involved in peptidoglycan metabolism and remodeling. The polypeptide is Broad specificity amino-acid racemase RacX (racX) (Bacillus subtilis (strain 168)).